An 85-amino-acid polypeptide reads, in one-letter code: Makatoxin-3 (85 aa).

An N-terminal signal peptide occupies residues 1–19 (MNYLIVISFALLLMTGVES). The LCN-type CS-alpha/beta domain maps to 21-83 (RDAYIAKKEN…VPIRIPGPCI (63 aa)). 4 disulfide bridges follow: cysteine 31–cysteine 82, cysteine 35–cysteine 55, cysteine 41–cysteine 65, and cysteine 45–cysteine 67.

The protein belongs to the long (4 C-C) scorpion toxin superfamily. Sodium channel inhibitor family. Alpha subfamily. As to expression, expressed by the venom gland.

It is found in the secreted. This protein markedly relaxes the rat carbachol-precontracted anococcygeus muscle. This relaxation is inhibited by the inhibitor of nitric oxide (NO) synthase, N-nitro-L-arginine methyl ester (L-NAME), suggesting that the response induced by this protein is NO-mediated. This chain is Makatoxin-3, found in Olivierus martensii (Manchurian scorpion).